A 232-amino-acid chain; its full sequence is LexA repressor (232 aa).

Positions 35–55 form a DNA-binding region, H-T-H motif; the sequence is IREIGDAAGLQSTSSVAYQLK. The segment covering 61 to 85 has biased composition (basic and acidic residues); it reads GFLRRDPNKPRAVDVRHLPETESRS. Positions 61–104 are disordered; the sequence is GFLRRDPNKPRAVDVRHLPETESRSSKAATQAKSKAPQAGVHDP. Over residues 86-99 the composition is skewed to low complexity; the sequence is SKAATQAKSKAPQA. Residues Ser156 and Lys193 each act as for autocatalytic cleavage activity in the active site.

It belongs to the peptidase S24 family. As to quaternary structure, homodimer.

The enzyme catalyses Hydrolysis of Ala-|-Gly bond in repressor LexA.. Its function is as follows. Represses a number of genes involved in the response to DNA damage (SOS response), including recA and lexA. In the presence of single-stranded DNA, RecA interacts with LexA causing an autocatalytic cleavage which disrupts the DNA-binding part of LexA, leading to derepression of the SOS regulon and eventually DNA repair. The polypeptide is LexA repressor (Corynebacterium glutamicum (strain ATCC 13032 / DSM 20300 / JCM 1318 / BCRC 11384 / CCUG 27702 / LMG 3730 / NBRC 12168 / NCIMB 10025 / NRRL B-2784 / 534)).